The following is a 93-amino-acid chain: SH3 domain-binding glutamic acid-rich-like protein 3 (93 aa).

At Ser2 the chain carries N-acetylserine. The Glutaredoxin domain maps to 2-93; the sequence is SGLRVYSTSV…NTLQEFLKLA (92 aa). O-linked (GalNAc...) threonine glycosylation is present at Thr9.

The protein belongs to the SH3BGR family. Interacts with MYO1C (via its IQ motifs); the interaction is dependent on calcium and takes place at membrane ruffles. May be glycosylated. In terms of tissue distribution, expressed in heart, liver, lung, kidney, spleen, thymus, ovarian follicles, skeletal muscle, brain, lymph node and mammary epithelial and stromal cells (at protein level).

The protein localises to the cytoplasm. The protein resides in the cytosol. Its subcellular location is the cell projection. It localises to the ruffle membrane. It is found in the nucleus. Its function is as follows. Could act as a modulator of glutaredoxin biological activity. May play a role in cytoskeleton organization. The chain is SH3 domain-binding glutamic acid-rich-like protein 3 from Rattus norvegicus (Rat).